The following is a 474-amino-acid chain: MTQNIGKITQVISAVVDVKFTNNSKLPEILNALECYNAKQRIVLEVAQHIGDDTVRCISMGSTEGLIRGLEVIDTGNPIHIPVGIATLGRIMNVVGEPIDGKGEIKSSTISSIYKPAPDFINQSTERDILVTGIKVVDLLAPYTKGGKIGLFGGAGVGKTVLIMELINNVAKAHGGYTVFAGVGERTREGNDLYHEMIASGVINLEAPEKSKVALVYGQMNEPPGARARVALSGLTIAESFRDMNAGQDVLFFVDNIFRFTQAGAEVSALLGRIPSAVGYQPTLATDMGELQERITSTKHGSITSVQAIYVPADDLTDPAPSTSFAHLDATTVLSRQIAELGIYPAVDPLDSNSQVLDPMIVGEEHYSVARQVQQVLQTYKSLQDIIAILGMDELSEEDKLTVSRARKIQRFLSQPFHVAEVFTGVEGKFVNLDDTIAGFKGLVEGKYDDLPEAAFYMVGTIDEAVEKAKILKI.

153–160 (GGAGVGKT) lines the ATP pocket.

It belongs to the ATPase alpha/beta chains family. F-type ATPases have 2 components, CF(1) - the catalytic core - and CF(0) - the membrane proton channel. CF(1) has five subunits: alpha(3), beta(3), gamma(1), delta(1), epsilon(1). CF(0) has three main subunits: a(1), b(2) and c(9-12). The alpha and beta chains form an alternating ring which encloses part of the gamma chain. CF(1) is attached to CF(0) by a central stalk formed by the gamma and epsilon chains, while a peripheral stalk is formed by the delta and b chains.

It localises to the cell inner membrane. The catalysed reaction is ATP + H2O + 4 H(+)(in) = ADP + phosphate + 5 H(+)(out). Its function is as follows. Produces ATP from ADP in the presence of a proton gradient across the membrane. The catalytic sites are hosted primarily by the beta subunits. The chain is ATP synthase subunit beta from Rickettsia typhi (strain ATCC VR-144 / Wilmington).